Consider the following 81-residue polypeptide: Cytotoxin (81 aa).

Positions 1-21 (MKTLLLTTVVVTIVCLDLEYT) are cleaved as a signal peptide. 4 disulfide bridges follow: cysteine 24–cysteine 42, cysteine 35–cysteine 59, cysteine 63–cysteine 74, and cysteine 75–cysteine 80.

It belongs to the three-finger toxin family. Short-chain subfamily. Type IA cytotoxin sub-subfamily. Monomer in solution; Homodimer and oligomer in the presence of negatively charged lipids forming a pore with a size ranging between 20 and 30 Angstroms. Expressed by the venom gland.

The protein localises to the secreted. The protein resides in the target cell membrane. Functionally, shows cytolytic activity on many different cells by forming pore in lipid membranes. In vivo, increases heart rate or kills the animal by cardiac arrest. In addition, it binds to heparin with high affinity, interacts with Kv channel-interacting protein 1 (KCNIP1) in a calcium-independent manner, and binds to integrin alpha-V/beta-3 (ITGAV/ITGB3) with moderate affinity. In Naja sputatrix (Malayan spitting cobra), this protein is Cytotoxin.